The following is a 199-amino-acid chain: RNA-free ribonuclease P (199 aa).

Belongs to the HARP family.

The catalysed reaction is Endonucleolytic cleavage of RNA, removing 5'-extranucleotides from tRNA precursor.. Its function is as follows. RNA-free RNase P that catalyzes the removal of the 5'-leader sequence from pre-tRNA to produce the mature 5'-terminus. This chain is RNA-free ribonuclease P, found in Thermococcus onnurineus (strain NA1).